Reading from the N-terminus, the 404-residue chain is Argininosuccinate synthase (404 aa).

ATP contacts are provided by residues 11–19 and alanine 38; that span reads AYSGGLDTS. L-citrulline contacts are provided by tyrosine 91 and serine 96. ATP is bound at residue glycine 121. Positions 123, 127, and 128 each coordinate L-aspartate. Position 127 (asparagine 127) interacts with L-citrulline. Positions 131, 182, 191, 267, and 279 each coordinate L-citrulline.

Belongs to the argininosuccinate synthase family. Type 1 subfamily. Homotetramer.

It is found in the cytoplasm. The enzyme catalyses L-citrulline + L-aspartate + ATP = 2-(N(omega)-L-arginino)succinate + AMP + diphosphate + H(+). It participates in amino-acid biosynthesis; L-arginine biosynthesis; L-arginine from L-ornithine and carbamoyl phosphate: step 2/3. This chain is Argininosuccinate synthase, found in Paramagnetospirillum magneticum (strain ATCC 700264 / AMB-1) (Magnetospirillum magneticum).